The following is an 86-amino-acid chain: Toxin Cn1 (86 aa).

The N-terminal stretch at 1–19 is a signal peptide; it reads MNSLLMITACFVLIGTVWA. The LCN-type CS-alpha/beta domain occupies 20–84; sequence KDGYLVDAKG…TWPLPNKTCS (65 aa). 4 disulfide bridges follow: Cys-30–Cys-83, Cys-34–Cys-59, Cys-43–Cys-64, and Cys-47–Cys-66. Ser-84 carries the serine amide modification.

The protein belongs to the long (4 C-C) scorpion toxin superfamily. Sodium channel inhibitor family. Beta subfamily. Expressed by the venom gland.

The protein localises to the secreted. Beta toxins bind voltage-independently at site-4 of sodium channels (Nav) and shift the voltage of activation toward more negative potentials thereby affecting sodium channel activation and promoting spontaneous and repetitive firing. This chain is Toxin Cn1, found in Centruroides noxius (Mexican scorpion).